A 222-amino-acid polypeptide reads, in one-letter code: 2-C-methyl-D-erythritol 4-phosphate cytidylyltransferase (222 aa).

Belongs to the IspD/TarI cytidylyltransferase family. IspD subfamily.

The catalysed reaction is 2-C-methyl-D-erythritol 4-phosphate + CTP + H(+) = 4-CDP-2-C-methyl-D-erythritol + diphosphate. It participates in isoprenoid biosynthesis; isopentenyl diphosphate biosynthesis via DXP pathway; isopentenyl diphosphate from 1-deoxy-D-xylulose 5-phosphate: step 2/6. Functionally, catalyzes the formation of 4-diphosphocytidyl-2-C-methyl-D-erythritol from CTP and 2-C-methyl-D-erythritol 4-phosphate (MEP). This Thermotoga maritima (strain ATCC 43589 / DSM 3109 / JCM 10099 / NBRC 100826 / MSB8) protein is 2-C-methyl-D-erythritol 4-phosphate cytidylyltransferase.